A 393-amino-acid chain; its full sequence is Decapping nuclease dom-3 (393 aa).

Residues 1–37 (MSHYGGNPRGNSSHQFGRKDFQQSDSKHIPKITGQPL) are disordered. The span at 17-28 (GRKDFQQSDSKH) shows a compositional bias: basic and acidic residues. Substrate-binding positions include Arg74, Glu113, and 144–146 (WRG). The Mg(2+) site is built by Glu205, Glu257, Asp259, Glu269, and Leu270. Substrate is bound at residue Glu257. Residues Lys271 and Gln293 each contribute to the substrate site.

This sequence belongs to the DXO/Dom3Z family. The cofactor is Mg(2+).

It catalyses the reaction a 5'-end NAD(+)-phospho-ribonucleoside in mRNA + H2O = a 5'-end phospho-ribonucleoside in mRNA + NAD(+) + H(+). The enzyme catalyses a 5'-end (N(7)-methyl 5'-triphosphoguanosine)-ribonucleoside-ribonucleotide in mRNA + H2O = a (N(7)-methyl 5'-triphosphoguanosine)-nucleoside + a 5'-end phospho-ribonucleoside in mRNA + H(+). It carries out the reaction a 5'-end triphospho-ribonucleoside in mRNA + H2O = a 5'-end phospho-ribonucleoside in mRNA + diphosphate + H(+). In terms of biological role, decapping enzyme for NAD-capped RNAs: specifically hydrolyzes the nicotinamide adenine dinucleotide (NAD) cap from a subset of RNAs by removing the entire NAD moiety from the 5'-end of an NAD-capped RNA. The NAD-cap is present at the 5'-end of some RNAs and snoRNAs. In contrast to the canonical 5'-end N7 methylguanosine (m7G) cap, the NAD cap promotes mRNA decay. Also acts as a non-canonical decapping enzyme that removes the entire cap structure of m7G capped or incompletely capped RNAs and mediates their subsequent degradation. Specifically degrades pre-mRNAs with a defective 5'-end m7G cap and is part of a pre-mRNA capping quality control. Also possesses RNA 5'-pyrophosphohydrolase activity by hydrolyzing the 5'-end triphosphate to release pyrophosphates. In Caenorhabditis elegans, this protein is Decapping nuclease dom-3.